A 320-amino-acid chain; its full sequence is o-succinylbenzoate synthase (320 aa).

Lys-133 functions as the Proton donor in the catalytic mechanism. Asp-161, Glu-190, and Asp-213 together coordinate Mg(2+). The active-site Proton acceptor is Lys-235.

It belongs to the mandelate racemase/muconate lactonizing enzyme family. MenC type 1 subfamily. A divalent metal cation is required as a cofactor.

The catalysed reaction is (1R,6R)-6-hydroxy-2-succinyl-cyclohexa-2,4-diene-1-carboxylate = 2-succinylbenzoate + H2O. It functions in the pathway quinol/quinone metabolism; 1,4-dihydroxy-2-naphthoate biosynthesis; 1,4-dihydroxy-2-naphthoate from chorismate: step 4/7. Its pathway is quinol/quinone metabolism; menaquinone biosynthesis. Functionally, converts 2-succinyl-6-hydroxy-2,4-cyclohexadiene-1-carboxylate (SHCHC) to 2-succinylbenzoate (OSB). The chain is o-succinylbenzoate synthase from Escherichia coli O6:K15:H31 (strain 536 / UPEC).